The chain runs to 425 residues: Trigger factor (425 aa).

Residues glycine 163 to proline 248 form the PPIase FKBP-type domain.

It belongs to the FKBP-type PPIase family. Tig subfamily.

The protein localises to the cytoplasm. It carries out the reaction [protein]-peptidylproline (omega=180) = [protein]-peptidylproline (omega=0). In terms of biological role, involved in protein export. Acts as a chaperone by maintaining the newly synthesized protein in an open conformation. Functions as a peptidyl-prolyl cis-trans isomerase. This chain is Trigger factor, found in Bacillus cereus (strain ATCC 10987 / NRS 248).